The chain runs to 430 residues: Histidine--tRNA ligase (430 aa).

The protein belongs to the class-II aminoacyl-tRNA synthetase family.

It is found in the cytoplasm. It catalyses the reaction tRNA(His) + L-histidine + ATP = L-histidyl-tRNA(His) + AMP + diphosphate + H(+). The chain is Histidine--tRNA ligase from Metallosphaera sedula (strain ATCC 51363 / DSM 5348 / JCM 9185 / NBRC 15509 / TH2).